Here is a 122-residue protein sequence, read N- to C-terminus: Flowering-promoting factor 1-like protein 3 (122 aa).

The tract at residues 16-36 (ENPGSEESSSAGDGGGGGRRK) is disordered.

Belongs to the FPF1 family.

The protein is Flowering-promoting factor 1-like protein 3 of Oryza sativa subsp. japonica (Rice).